The following is a 320-amino-acid chain: NAC domain-containing protein 20 (320 aa).

The 157-residue stretch at 14 to 170 folds into the NAC domain; it reads LPPGFRFHPT…DWAVCRIFHK (157 aa). The DNA-binding element occupies 114–176; the sequence is IGMKKTLVFY…IFHKSSGIKK (63 aa).

In terms of assembly, forms homodimers. Forms heterodimers with NAC26. In terms of tissue distribution, expressed in developing seeds. Expressed in developing endosperm.

It localises to the nucleus. Its subcellular location is the endoplasmic reticulum. Functionally, transcription factor that acts redundantly with NAC26 to regulate the expression of genes involved in the biosynthesis of starch and storage proteins in grain. Directly binds to the promoters of starch synthase 1 (SS1), pullulanase (PUL), glutelin A1 (GLUA1), glutelins B4 and B5 (GLUB4 and GLUB5), alpha-globulin and 16 kDa prolamin, and activates their expression. The sequence is that of NAC domain-containing protein 20 from Oryza sativa subsp. japonica (Rice).